A 701-amino-acid polypeptide reads, in one-letter code: MARKTPIKHYRNIGISAHIDAGKTTTTERILLYTGVNHKIGEVHDGAATMDWMEQEKERGITITSAATTAFWSGMAKQFEPHRINIIDTPGHVDFTIEVERSMRVLDGAVMVYCAVGGVQPQSETVWRQANKYHVPRIAFVNKMDRMGANFLRVVEQIKTRLAANPVPIQLAIGSEEKFTGVIDLVKMKAIHWNEKDQGLTFEYQDVPDDMQQLAEKWRQNMIESAAEASEELMDKYLGGEELTEEEIKQGLRQRALKNEIILVTCGSAFKNKGVQAMLDAVIEYLPAPIDVEAIKGVLDDKGTPVIRHSKDEEPFSALAFKIATDPFVGNLTFFRVYSGVVNSGDTVLNSVKGQKERIGRIVQMHANKREEIKEVRAGDIAAAIGLKDATTGDTLCDLAHPVILERMEFPEPVISVALEPKTKADQEKMGIALGRLAKEDPSFRVWTDEESSQTIIAGMGELHLDILVDRMKREFNVEANVGKPQVAYRETIRKTVEQEGKFIRQSGGRGQYGHVWLRIEPLEPGGKGYEFLNEIVGGVIPKEYIPAVDKGVQEQLKNGVLAAYPVVDVRVAVFDGSYHDVDSSEIAFKVAGAMAFKEGFMKAKPVLLEPIMKIEVETPEEYMGDVIGDLNRRRGVIDGMDDTSTGKTIRAQVPLSEMFGYATDLRSQTQGRASYSMEFLQYSEAPANVSKTIIESRNTK.

The tr-type G domain maps to K8–I290. GTP contacts are provided by residues A17–T24, D88–H92, and N142–D145.

The protein belongs to the TRAFAC class translation factor GTPase superfamily. Classic translation factor GTPase family. EF-G/EF-2 subfamily.

Its subcellular location is the cytoplasm. Its function is as follows. Catalyzes the GTP-dependent ribosomal translocation step during translation elongation. During this step, the ribosome changes from the pre-translocational (PRE) to the post-translocational (POST) state as the newly formed A-site-bound peptidyl-tRNA and P-site-bound deacylated tRNA move to the P and E sites, respectively. Catalyzes the coordinated movement of the two tRNA molecules, the mRNA and conformational changes in the ribosome. The chain is Elongation factor G from Hamiltonella defensa subsp. Acyrthosiphon pisum (strain 5AT).